Reading from the N-terminus, the 181-residue chain is Crossover junction endodeoxyribonuclease RuvC (181 aa).

Active-site residues include Asp-8, Glu-67, and Asp-139. Mg(2+) is bound by residues Asp-8, Glu-67, and Asp-139.

It belongs to the RuvC family. As to quaternary structure, homodimer which binds Holliday junction (HJ) DNA. The HJ becomes 2-fold symmetrical on binding to RuvC with unstacked arms; it has a different conformation from HJ DNA in complex with RuvA. In the full resolvosome a probable DNA-RuvA(4)-RuvB(12)-RuvC(2) complex forms which resolves the HJ. Requires Mg(2+) as cofactor.

It localises to the cytoplasm. It carries out the reaction Endonucleolytic cleavage at a junction such as a reciprocal single-stranded crossover between two homologous DNA duplexes (Holliday junction).. The RuvA-RuvB-RuvC complex processes Holliday junction (HJ) DNA during genetic recombination and DNA repair. Endonuclease that resolves HJ intermediates. Cleaves cruciform DNA by making single-stranded nicks across the HJ at symmetrical positions within the homologous arms, yielding a 5'-phosphate and a 3'-hydroxyl group; requires a central core of homology in the junction. The consensus cleavage sequence is 5'-(A/T)TT(C/G)-3'. Cleavage occurs on the 3'-side of the TT dinucleotide at the point of strand exchange. HJ branch migration catalyzed by RuvA-RuvB allows RuvC to scan DNA until it finds its consensus sequence, where it cleaves and resolves the cruciform DNA. This Acinetobacter baumannii (strain SDF) protein is Crossover junction endodeoxyribonuclease RuvC.